We begin with the raw amino-acid sequence, 141 residues long: Hemoglobin subunit alpha (141 aa).

Residues Val-1–Arg-141 form the Globin domain. Ser-3 is modified (phosphoserine). Lys-7 bears the N6-succinyllysine mark. A Phosphothreonine modification is found at Thr-8. Lys-11 carries the post-translational modification N6-succinyllysine. Lys-16 is modified (N6-acetyllysine; alternate). Lys-16 carries the post-translational modification N6-succinyllysine; alternate. Phosphotyrosine is present on Tyr-24. Ser-35 is modified (phosphoserine). Lys-40 bears the N6-succinyllysine mark. Ser-49 carries the phosphoserine modification. His-58 contributes to the O2 binding site. Residue His-87 coordinates heme b. Ser-102 is subject to Phosphoserine. Thr-108 carries the phosphothreonine modification. Phosphoserine is present on Ser-124. Phosphothreonine occurs at positions 134 and 137. Ser-138 carries the post-translational modification Phosphoserine.

The protein belongs to the globin family. Heterotetramer of two alpha chains and two beta chains. In terms of tissue distribution, red blood cells.

Functionally, involved in oxygen transport from the lung to the various peripheral tissues. Its function is as follows. Hemopressin acts as an antagonist peptide of the cannabinoid receptor CNR1. Hemopressin-binding efficiently blocks cannabinoid receptor CNR1 and subsequent signaling. The polypeptide is Hemoglobin subunit alpha (HBA) (Martes foina (Beech marten)).